The primary structure comprises 710 residues: Polyribonucleotide nucleotidyltransferase (710 aa).

Residues aspartate 488 and aspartate 494 each coordinate Mg(2+). The KH domain maps to proline 555–isoleucine 615. The S1 motif domain maps to glycine 625 to phenylalanine 688. Residues phenylalanine 688–asparagine 710 form a disordered region. Basic and acidic residues predominate over residues serine 691–arginine 700. Residues serine 701 to asparagine 710 show a composition bias toward basic residues.

It belongs to the polyribonucleotide nucleotidyltransferase family. The cofactor is Mg(2+).

Its subcellular location is the cytoplasm. The enzyme catalyses RNA(n+1) + phosphate = RNA(n) + a ribonucleoside 5'-diphosphate. Functionally, involved in mRNA degradation. Catalyzes the phosphorolysis of single-stranded polyribonucleotides processively in the 3'- to 5'-direction. This chain is Polyribonucleotide nucleotidyltransferase, found in Pseudothermotoga lettingae (strain ATCC BAA-301 / DSM 14385 / NBRC 107922 / TMO) (Thermotoga lettingae).